We begin with the raw amino-acid sequence, 150 residues long: SPbeta prophage-derived uncharacterized protein YoqH (150 aa).

The N-terminal stretch at Met-1 to Ala-23 is a signal peptide.

The protein is SPbeta prophage-derived uncharacterized protein YoqH (yoqH) of Bacillus subtilis (strain 168).